The chain runs to 138 residues: uncharacterized protein (138 aa).

This is an uncharacterized protein from Thiocystis violacea.